The sequence spans 363 residues: UDP-N-acetylglucosamine--N-acetylmuramyl-(pentapeptide) pyrophosphoryl-undecaprenol N-acetylglucosamine transferase (363 aa).

UDP-N-acetyl-alpha-D-glucosamine is bound by residues 10–12 (TGG), Asn124, Ser195, Ile249, and Gln294.

The protein belongs to the glycosyltransferase 28 family. MurG subfamily.

It localises to the cell membrane. The catalysed reaction is Mur2Ac(oyl-L-Ala-gamma-D-Glu-L-Lys-D-Ala-D-Ala)-di-trans,octa-cis-undecaprenyl diphosphate + UDP-N-acetyl-alpha-D-glucosamine = beta-D-GlcNAc-(1-&gt;4)-Mur2Ac(oyl-L-Ala-gamma-D-Glu-L-Lys-D-Ala-D-Ala)-di-trans,octa-cis-undecaprenyl diphosphate + UDP + H(+). It participates in cell wall biogenesis; peptidoglycan biosynthesis. Cell wall formation. Catalyzes the transfer of a GlcNAc subunit on undecaprenyl-pyrophosphoryl-MurNAc-pentapeptide (lipid intermediate I) to form undecaprenyl-pyrophosphoryl-MurNAc-(pentapeptide)GlcNAc (lipid intermediate II). This chain is UDP-N-acetylglucosamine--N-acetylmuramyl-(pentapeptide) pyrophosphoryl-undecaprenol N-acetylglucosamine transferase, found in Leuconostoc mesenteroides subsp. mesenteroides (strain ATCC 8293 / DSM 20343 / BCRC 11652 / CCM 1803 / JCM 6124 / NCDO 523 / NBRC 100496 / NCIMB 8023 / NCTC 12954 / NRRL B-1118 / 37Y).